A 352-amino-acid chain; its full sequence is UDP-3-O-acylglucosamine N-acyltransferase (352 aa).

Residue H242 is the Proton acceptor of the active site.

Belongs to the transferase hexapeptide repeat family. LpxD subfamily. Homotrimer.

It catalyses the reaction a UDP-3-O-[(3R)-3-hydroxyacyl]-alpha-D-glucosamine + a (3R)-hydroxyacyl-[ACP] = a UDP-2-N,3-O-bis[(3R)-3-hydroxyacyl]-alpha-D-glucosamine + holo-[ACP] + H(+). Its pathway is bacterial outer membrane biogenesis; LPS lipid A biosynthesis. In terms of biological role, catalyzes the N-acylation of UDP-3-O-acylglucosamine using 3-hydroxyacyl-ACP as the acyl donor. Is involved in the biosynthesis of lipid A, a phosphorylated glycolipid that anchors the lipopolysaccharide to the outer membrane of the cell. The chain is UDP-3-O-acylglucosamine N-acyltransferase from Alkalilimnicola ehrlichii (strain ATCC BAA-1101 / DSM 17681 / MLHE-1).